Reading from the N-terminus, the 102-residue chain is Large ribosomal subunit protein bL21 (102 aa).

It belongs to the bacterial ribosomal protein bL21 family. Part of the 50S ribosomal subunit. Contacts protein L20.

Functionally, this protein binds to 23S rRNA in the presence of protein L20. The chain is Large ribosomal subunit protein bL21 from Campylobacter jejuni subsp. jejuni serotype O:6 (strain 81116 / NCTC 11828).